A 150-amino-acid chain; its full sequence is uncharacterized protein (150 aa).

A signal peptide spans 1–21 (MAMEMAMMGLLGTVVGASAMG).

This is an uncharacterized protein from Mycobacterium tuberculosis (strain CDC 1551 / Oshkosh).